The primary structure comprises 452 residues: MTPRSYCVVGGGISGLTSAYRLRQAVGDDATITLFEPADRLGGVLRTEHIGGQPMDLGAEAFVLRRPEMPALLAELGLSDRQLASTGARPLIYSQQRLHPLPPQTVVGIPSSAGSMAGLVDDATLARIDAEAARPFTWQVGSDPAVADLVADRFGDQVVARSVDPLLSGVYAGSAATIGLRAAAPSVAAALDRGATSVTDAVRQALPPGSGGPVFGALDGGYQVLLDGLVRRSRVHWVRARVVQLERGWVLRDETGGRWQADAVILAVPAPRLARLVDGIAPRTHAAARQIVSASSAVVALAVPGGTAFPHCSGVLVAGDESPHAKAITLSSRKWGQRGDVALLRLSFGRFGDEPALTASDDQLLAWAADDLVTVFGVAVDPVDVRVRRWIEAMPQYGPGHADVVAELRAGLPPTLAVAGSYLDGIGVPACVGAAGRAVTSVIEALDAQVAR.

Residues 10–15 (GGGISG), 36–37 (EP), 58–61 (GAEA), V242, W390, and 426–428 (IGV) contribute to the FAD site.

Belongs to the protoporphyrinogen/coproporphyrinogen oxidase family. Coproporphyrinogen III oxidase subfamily. The cofactor is FAD.

It is found in the cytoplasm. The catalysed reaction is coproporphyrinogen III + 3 O2 = coproporphyrin III + 3 H2O2. Its pathway is porphyrin-containing compound metabolism; protoheme biosynthesis. In terms of biological role, involved in coproporphyrin-dependent heme b biosynthesis. Catalyzes the oxidation of coproporphyrinogen III to coproporphyrin III. This is Coproporphyrinogen III oxidase from Mycobacterium bovis (strain ATCC BAA-935 / AF2122/97).